The following is a 182-amino-acid chain: Bifunctional protein PyrR (182 aa).

Positions 97–109 match the PRPP-binding motif; the sequence is VVLVDDVIFRGRT.

It belongs to the purine/pyrimidine phosphoribosyltransferase family. PyrR subfamily.

The enzyme catalyses UMP + diphosphate = 5-phospho-alpha-D-ribose 1-diphosphate + uracil. Regulates the transcription of the pyrimidine nucleotide (pyr) operon in response to exogenous pyrimidines. In terms of biological role, also displays a weak uracil phosphoribosyltransferase activity which is not physiologically significant. The chain is Bifunctional protein PyrR from Synechococcus sp. (strain JA-2-3B'a(2-13)) (Cyanobacteria bacterium Yellowstone B-Prime).